The following is a 500-amino-acid chain: Coiled-coil domain-containing protein 85A (500 aa).

A compositionally biased stretch (low complexity) spans 1–23 (MSKAAGGSAPAAESCPSAPAGAS). A disordered region spans residues 1 to 30 (MSKAAGGSAPAAESCPSAPAGASTPTGVDD). 2 coiled-coil regions span residues 38–104 (ELLQ…RDLC) and 132–171 (MHKEVALYLQKLKELEVKQEEVVKENMELKELCMLLDEEK). 2 disordered regions span residues 200–405 (RDVG…SGMN) and 426–465 (NRMLPQGSFRLSSGADGNNSSLNSPASFSGHTTPSQQPEP). Residues 204 to 215 (DGSSTSSTGSTD) show a composition bias toward low complexity. Basic and acidic residues predominate over residues 231–254 (HLQKPRSEGSPEHTKHRSTSPEHL). Residues 372-381 (GSGGSGGGSR) show a composition bias toward gly residues. Residues 383–395 (GTLRRPAQEDSSS) are compositionally biased toward basic and acidic residues. Residues 404 to 429 (MNESTLSYVRQLEARVRQLEEENRML) are a coiled coil. Over residues 434–463 (FRLSSGADGNNSSLNSPASFSGHTTPSQQP) the composition is skewed to polar residues. At arginine 488 the chain carries Asymmetric dimethylarginine.

Belongs to the CCDC85 family. May interact with ARVCF; CTNND1; CTNND2 and PKP4.

The protein resides in the cell junction. The protein localises to the adherens junction. Functionally, may play a role in cell-cell adhesion and epithelium development through its interaction with proteins of the beta-catenin family. The chain is Coiled-coil domain-containing protein 85A (Ccdc85a) from Mus musculus (Mouse).